The following is a 381-amino-acid chain: CD209 antigen (381 aa).

Topologically, residues 1–37 (MSDSKEPSVQQLGLLEEEQLRGLGFRQTRGYKSLAGC) are cytoplasmic. 3 short sequence motifs (endocytosis signal) span residues 14-15 (LL), 16-18 (EEE), and 31-34 (YKSL). Residues 38–58 (LGHGXLVLQLLSFTXLAGLLI) form a helical; Signal-anchor for type II membrane protein membrane-spanning segment. Over 59–381 (QVSKFPSSIS…APATPNPPPA (323 aa)) the chain is Extracellular. N80 carries an N-linked (GlcNAc...) asparagine glycan. 6 repeat units span residues 96–118 (KLQE…PEKS), 119–141 (QQQE…PEKS), 142–164 (TQQE…PEQS), 165–187 (KLQE…PEKS), 188–210 (KQQE…PEKS), and 211–234 (KQQE…RPCP). A 6 X approximate tandem repeats region spans residues 96-303 (KLQEIYQELT…GLSDVNQEGT (208 aa)). 3 cysteine pairs are disulfide-bonded: C233/C244, C261/C354, and C333/C346. Residues 240–355 (FQGNCYFMSN…CNHAKFWICK (116 aa)) enclose the C-type lectin domain. E324, N326, I328, E331, N342, and D343 together coordinate Ca(2+).

In terms of assembly, homotetramer. Interacts with C1QBP; the interaction is indicative for a C1q:C1QBP:CD209 signaling complex. Interacts with ICAM2 and ICAM3 by binding to mannose-like carbohydrates. Interacts (via C-type lectin domain) with CEACAM1 (via Lewis X moieties); this interaction is regulated by the glycosylation pattern of CEACAM1 on cell types and regulates contact between dendritic cells and neutrophils.

It is found in the membrane. Pathogen-recognition receptor expressed on the surface of immature dendritic cells (DCs) and involved in initiation of primary immune response. Thought to mediate the endocytosis of pathogens which are subsequently degraded in lysosomal compartments. The receptor returns to the cell membrane surface and the pathogen-derived antigens are presented to resting T-cells via MHC class II proteins to initiate the adaptive immune response. Probably recognizes in a calcium-dependent manner high mannose N-linked oligosaccharides in a variety of pathogen antigens. In terms of biological role, on DCs it is a high affinity receptor for ICAM2 and ICAM3 by binding to mannose-like carbohydrates. May act as a DC rolling receptor that mediates transendothelial migration of DC presursors from blood to tissues by binding endothelial ICAM2. Seems to regulate DC-induced T-cell proliferation by binding to ICAM3 on T-cells in the immunological synapse formed between DC and T-cells. In Symphalangus syndactylus (Siamang), this protein is CD209 antigen (CD209).